The following is an 87-amino-acid chain: Beta-toxin Cn4 (87 aa).

The first 19 residues, 1-19 (MNSLLMITACLALVGTVWA), serve as a signal peptide directing secretion. The 66-residue stretch at 20-85 (KEGYLVNSYT…VWPLKNKTCN (66 aa)) folds into the LCN-type CS-alpha/beta domain. Cystine bridges form between cysteine 31–cysteine 84, cysteine 35–cysteine 60, cysteine 44–cysteine 65, and cysteine 48–cysteine 67. At asparagine 85 the chain carries Asparagine amide.

This sequence belongs to the long (4 C-C) scorpion toxin superfamily. Sodium channel inhibitor family. Beta subfamily. As to expression, expressed by the venom gland.

Its subcellular location is the secreted. In terms of biological role, beta toxins bind voltage-independently at site-4 of sodium channels (Nav) and shift the voltage of activation toward more negative potentials thereby affecting sodium channel activation and promoting spontaneous and repetitive firing. This toxin affects the activation mechanism of sodium channels of squid axon. It also competes with Cn2 in rat brain synaptosomes. Is lethal to mice. The protein is Beta-toxin Cn4 of Centruroides noxius (Mexican scorpion).